The chain runs to 582 residues: Putative BTB/POZ domain-containing protein At3g08660 (582 aa).

The tract at residues 1-21 (MGSDSTLSLPSSSPPCNNRSS) is disordered. The BTB domain maps to 36 to 103 (GDIIVVVDGE…CYGINFDITA (68 aa)). Positions 196–466 (EMWTEELSAL…VRVLYTEQLR (271 aa)) constitute an NPH3 domain. Tyr-407 carries the phosphotyrosine modification. Residues 558–582 (GGETRQKVNRKSRSVSERKSSRSGR) are disordered. Residues 571–582 (SVSERKSSRSGR) are compositionally biased toward basic and acidic residues.

It belongs to the NPH3 family.

It functions in the pathway protein modification; protein ubiquitination. May act as a substrate-specific adapter of an E3 ubiquitin-protein ligase complex (CUL3-RBX1-BTB) which mediates the ubiquitination and subsequent proteasomal degradation of target proteins. The protein is Putative BTB/POZ domain-containing protein At3g08660 of Arabidopsis thaliana (Mouse-ear cress).